A 675-amino-acid polypeptide reads, in one-letter code: Potassium-transporting ATPase ATP-binding subunit (675 aa).

A run of 4 helical transmembrane segments spans residues 34–54 (IMFVVEVGMILTLILICFPDI), 65–85 (LITIFIILLITILFANFSEAF), 216–236 (IALFTLLTTLTIIFLVVIVTL), and 245–265 (LILPIAMLIALTVCLIPTTIG). Asp-304 acts as the 4-aspartylphosphate intermediate in catalysis. ATP-binding positions include Asp-341, Glu-345, 372–379 (FTAETRMS), and Lys-390. Mg(2+) contacts are provided by Asp-513 and Asp-517. Transmembrane regions (helical) follow at residues 569 to 591 (ALTTFSLANDVAKYFAILPALMM), 611 to 631 (AIISALIFNALIIVALIPIAM), and 644 to 664 (IFINNMLIYGLGGLIVPFLGI).

It belongs to the cation transport ATPase (P-type) (TC 3.A.3) family. Type IA subfamily. The system is composed of three essential subunits: KdpA, KdpB and KdpC.

It localises to the cell membrane. It catalyses the reaction K(+)(out) + ATP + H2O = K(+)(in) + ADP + phosphate + H(+). Functionally, part of the high-affinity ATP-driven potassium transport (or Kdp) system, which catalyzes the hydrolysis of ATP coupled with the electrogenic transport of potassium into the cytoplasm. This subunit is responsible for energy coupling to the transport system and for the release of the potassium ions to the cytoplasm. This chain is Potassium-transporting ATPase ATP-binding subunit, found in Staphylococcus aureus (strain Newman).